The primary structure comprises 312 residues: UDP-N-acetylenolpyruvoylglucosamine reductase (312 aa).

An FAD-binding PCMH-type domain is found at 37–205; sequence VGGPADALVV…VCAEFALCPG (169 aa). Arginine 185 is a catalytic residue. The active-site Proton donor is the serine 234. Glutamate 304 is a catalytic residue.

This sequence belongs to the MurB family. It depends on FAD as a cofactor.

It localises to the cytoplasm. The catalysed reaction is UDP-N-acetyl-alpha-D-muramate + NADP(+) = UDP-N-acetyl-3-O-(1-carboxyvinyl)-alpha-D-glucosamine + NADPH + H(+). Its pathway is cell wall biogenesis; peptidoglycan biosynthesis. In terms of biological role, cell wall formation. The chain is UDP-N-acetylenolpyruvoylglucosamine reductase from Syntrophus aciditrophicus (strain SB).